An 86-amino-acid polypeptide reads, in one-letter code: Triple QxxK/R motif-containing protein (86 aa).

Residues 51–71 form a helical membrane-spanning segment; that stretch reads VGLMLAAILALLLAFYAFFYL.

The protein belongs to the TRIQK family.

The protein resides in the endoplasmic reticulum membrane. Its function is as follows. May play a role in cell growth and maintenance of cell morphology. This Rattus norvegicus (Rat) protein is Triple QxxK/R motif-containing protein (Triqk).